Reading from the N-terminus, the 170-residue chain is Photosystem II extrinsic protein V (170 aa).

An N-terminal signal peptide occupies residues 1–33 (MASLFSTLQRSLKGLLILVPVLIGLVLASPAEA). Residues Cys70, Cys73, His74, and Met137 each coordinate heme c.

Belongs to the cytochrome c family. PsbV subfamily. In terms of assembly, PSII is composed of 1 copy each of membrane proteins PsbA, PsbB, PsbC, PsbD, PsbE, PsbF, PsbH, PsbI, PsbJ, PsbK, PsbL, PsbM, PsbT, PsbX, PsbY, PsbZ, Psb30/Ycf12, peripheral proteins PsbO, CyanoQ (PsbQ), PsbU, PsbV and a large number of cofactors. It forms dimeric complexes. The cofactor is heme c.

The protein resides in the cellular thylakoid membrane. Its function is as follows. One of the extrinsic, lumenal subunits of photosystem II (PSII). PSII is a light-driven water plastoquinone oxidoreductase, using light energy to abstract electrons from H(2)O, generating a proton gradient subsequently used for ATP formation. The extrinsic proteins stabilize the structure of photosystem II oxygen-evolving complex (OEC), the ion environment of oxygen evolution and protect the OEC against heat-induced inactivation. Low-potential cytochrome c that plays a role in the OEC of PSII. The chain is Photosystem II extrinsic protein V from Parasynechococcus marenigrum (strain WH8102).